A 192-amino-acid polypeptide reads, in one-letter code: Casparian strip membrane protein 1 (192 aa).

The Cytoplasmic portion of the chain corresponds to 1–30; that stretch reads MSTTVDVPESSNVAKGKAIAVARPGGWKKG. The chain crosses the membrane as a helical span at residues 31–51; that stretch reads LAIMDFILRLGGIAASLGAAA. Topologically, residues 52 to 80 are extracellular; sequence TMGTSDQTLPFFTQFFQFEASYDSFTTFQ. Residues 81–101 traverse the membrane as a helical segment; that stretch reads FFVITMALVAGYLVLSLPFSV. Residues 102–113 lie on the Cytoplasmic side of the membrane; it reads VAIIRPHAPGPR. Residues 114-134 form a helical membrane-spanning segment; the sequence is LFLIILDTVFLTLATASGASA. Residues 135-166 lie on the Extracellular side of the membrane; the sequence is AAIVYLAHNGNQDSNWLAICNQFGDFCAQTSG. Residues 167–187 traverse the membrane as a helical segment; it reads AVVASFVAVVILVLLVIMSAL. Topologically, residues 188–192 are cytoplasmic; sequence ALRRH.

The protein belongs to the Casparian strip membrane proteins (CASP) family. In terms of assembly, homodimer and heterodimers.

The protein resides in the cell membrane. Its function is as follows. Regulates membrane-cell wall junctions and localized cell wall deposition. Required for establishment of the Casparian strip membrane domain (CSD) and the subsequent formation of Casparian strips, a cell wall modification of the root endodermis that determines an apoplastic barrier between the intraorganismal apoplasm and the extraorganismal apoplasm and prevents lateral diffusion. The protein is Casparian strip membrane protein 1 of Vigna unguiculata (Cowpea).